Reading from the N-terminus, the 280-residue chain is 2-dehydro-3-deoxyphosphooctonate aldolase (280 aa).

The protein belongs to the KdsA family.

The protein localises to the cytoplasm. It catalyses the reaction D-arabinose 5-phosphate + phosphoenolpyruvate + H2O = 3-deoxy-alpha-D-manno-2-octulosonate-8-phosphate + phosphate. It functions in the pathway carbohydrate biosynthesis; 3-deoxy-D-manno-octulosonate biosynthesis; 3-deoxy-D-manno-octulosonate from D-ribulose 5-phosphate: step 2/3. Its pathway is bacterial outer membrane biogenesis; lipopolysaccharide biosynthesis. This chain is 2-dehydro-3-deoxyphosphooctonate aldolase, found in Coxiella burnetii (strain CbuK_Q154) (Coxiella burnetii (strain Q154)).